The sequence spans 294 residues: Homoserine kinase (294 aa).

83–93 (RPKSGLGSSGA) lines the ATP pocket.

The protein belongs to the GHMP kinase family. Homoserine kinase subfamily.

It localises to the cytoplasm. The enzyme catalyses L-homoserine + ATP = O-phospho-L-homoserine + ADP + H(+). It participates in amino-acid biosynthesis; L-threonine biosynthesis; L-threonine from L-aspartate: step 4/5. In terms of biological role, catalyzes the ATP-dependent phosphorylation of L-homoserine to L-homoserine phosphate. The protein is Homoserine kinase of Pyrococcus abyssi (strain GE5 / Orsay).